We begin with the raw amino-acid sequence, 57 residues long: DNA-directed RNA polymerase subunit Rpo6 (57 aa).

The protein belongs to the archaeal Rpo6/eukaryotic RPB6 RNA polymerase subunit family. In terms of assembly, part of the RNA polymerase complex.

Its subcellular location is the cytoplasm. The enzyme catalyses RNA(n) + a ribonucleoside 5'-triphosphate = RNA(n+1) + diphosphate. DNA-dependent RNA polymerase (RNAP) catalyzes the transcription of DNA into RNA using the four ribonucleoside triphosphates as substrates. The protein is DNA-directed RNA polymerase subunit Rpo6 of Pyrococcus abyssi (strain GE5 / Orsay).